Reading from the N-terminus, the 425-residue chain is Histidine--tRNA ligase (425 aa).

It belongs to the class-II aminoacyl-tRNA synthetase family. Homodimer.

Its subcellular location is the cytoplasm. The enzyme catalyses tRNA(His) + L-histidine + ATP = L-histidyl-tRNA(His) + AMP + diphosphate + H(+). This Tolumonas auensis (strain DSM 9187 / NBRC 110442 / TA 4) protein is Histidine--tRNA ligase.